A 387-amino-acid chain; its full sequence is Glutamyl-tRNA reductase 1 (387 aa).

Residues 45–48 (TCNR), S96, 101–103 (ETD), and Q107 each bind substrate. C46 serves as the catalytic Nucleophile. 175 to 180 (GAGSVG) provides a ligand contact to NADP(+).

It belongs to the glutamyl-tRNA reductase family. Homodimer.

It catalyses the reaction (S)-4-amino-5-oxopentanoate + tRNA(Glu) + NADP(+) = L-glutamyl-tRNA(Glu) + NADPH + H(+). Its pathway is porphyrin-containing compound metabolism; protoporphyrin-IX biosynthesis; 5-aminolevulinate from L-glutamyl-tRNA(Glu): step 1/2. In terms of biological role, catalyzes the NADPH-dependent reduction of glutamyl-tRNA(Glu) to glutamate 1-semialdehyde (GSA). This is Glutamyl-tRNA reductase 1 from Pyrobaculum arsenaticum (strain DSM 13514 / JCM 11321 / PZ6).